Consider the following 438-residue polypeptide: Xanthine permease (438 aa).

A run of 13 helical transmembrane segments spans residues 11–31 (LGIQHVLAMYAGAIVVPLIVG), 41–61 (LTYLVSIDIFMCGVATLLQVW), 65–85 (FFGIGLPVVLGCTFTAVSPMI), 100–120 (IIASGILVILISFFFGKLVSF), 121–141 (FPPVVTGSVVTIIGITLMPVA), 154–174 (FGDLSNLALAFTVLSIIVLLY), 180–200 (FIKSVSILIGILIGTFIAYFM), 220–240 (FYFGAPSFHAAPIITMSIVAI), 272–292 (AEGLAVLLGGIFNAFPYTAFS), 308–328 (VIVVTGVILMAFGLFPKIAAF), 331–351 (IIPSAVLGGAMVAMFGMVIAY), 367–387 (LLIVACSVGLGLGVTVVPDIF), and 396–416 (LLTTNGIVAGSFTAVVLNIVY).

The protein belongs to the nucleobase:cation symporter-2 (NCS2) (TC 2.A.40) family.

It is found in the cell membrane. Its function is as follows. Transport of xanthine in the cell. This is Xanthine permease (pbuX) from Bacillus subtilis (strain 168).